A 710-amino-acid chain; its full sequence is Fatty acid oxidation complex subunit alpha (710 aa).

Residues 1 to 190 (MSMEKTFNLA…KMGLVNDVVP (190 aa)) form an enoyl-CoA hydratase region. The tract at residues 310–710 (RKVKKVMVLG…ASDGSQFYKK (401 aa)) is 3-hydroxyacyl-CoA dehydrogenase.

In the N-terminal section; belongs to the enoyl-CoA hydratase/isomerase family. The protein in the central section; belongs to the 3-hydroxyacyl-CoA dehydrogenase family. Heterotetramer of two alpha chains (FadJ) and two beta chains (FadI).

Its subcellular location is the cytoplasm. The catalysed reaction is a (3S)-3-hydroxyacyl-CoA = a (2E)-enoyl-CoA + H2O. It catalyses the reaction a 4-saturated-(3S)-3-hydroxyacyl-CoA = a (3E)-enoyl-CoA + H2O. It carries out the reaction a (3S)-3-hydroxyacyl-CoA + NAD(+) = a 3-oxoacyl-CoA + NADH + H(+). The enzyme catalyses (3S)-3-hydroxybutanoyl-CoA = (3R)-3-hydroxybutanoyl-CoA. It participates in lipid metabolism; fatty acid beta-oxidation. Its function is as follows. Catalyzes the formation of a hydroxyacyl-CoA by addition of water on enoyl-CoA. Also exhibits 3-hydroxyacyl-CoA epimerase and 3-hydroxyacyl-CoA dehydrogenase activities. The protein is Fatty acid oxidation complex subunit alpha of Shewanella frigidimarina (strain NCIMB 400).